The chain runs to 241 residues: Carboxy-S-adenosyl-L-methionine synthase 1 (241 aa).

Residues tyrosine 37, 61–63, asparagine 131, and arginine 198 each bind S-adenosyl-L-methionine; that span reads GCS.

The protein belongs to the class I-like SAM-binding methyltransferase superfamily. Cx-SAM synthase family. As to quaternary structure, homodimer.

The catalysed reaction is prephenate + S-adenosyl-L-methionine = carboxy-S-adenosyl-L-methionine + 3-phenylpyruvate + H2O. Functionally, catalyzes the conversion of S-adenosyl-L-methionine (SAM) to carboxy-S-adenosyl-L-methionine (Cx-SAM). The polypeptide is Carboxy-S-adenosyl-L-methionine synthase 1 (Yersinia pseudotuberculosis serotype IB (strain PB1/+)).